The following is a 448-amino-acid chain: Methionine aminopeptidase 2-1 (448 aa).

Positions 1–90 (MAAQASEKLE…PPRVPVSSLF (90 aa)) are disordered. The span at 22-33 (AAGPAKAGQADA) shows a compositional bias: low complexity. Residues 34–46 (GEVEDESDDDADD) show a composition bias toward acidic residues. Residues 47 to 58 (AGAAADGAANGA) show a composition bias toward low complexity. The segment covering 59–74 (AKKKKKRKSKKKKKGG) has biased composition (basic residues). Over residues 75 to 88 (AKVQSSPPRVPVSS) the composition is skewed to low complexity. His198 provides a ligand contact to substrate. Residues Asp218, Asp229, and His301 each contribute to the a divalent metal cation site. His309 lines the substrate pocket. A divalent metal cation-binding residues include Glu334 and Glu429.

This sequence belongs to the peptidase M24A family. Methionine aminopeptidase eukaryotic type 2 subfamily. Co(2+) serves as cofactor. The cofactor is Zn(2+). Requires Mn(2+) as cofactor. It depends on Fe(2+) as a cofactor.

Its subcellular location is the cytoplasm. It catalyses the reaction Release of N-terminal amino acids, preferentially methionine, from peptides and arylamides.. Cotranslationally removes the N-terminal methionine from nascent proteins. The N-terminal methionine is often cleaved when the second residue in the primary sequence is small and uncharged (Met-Ala-, Cys, Gly, Pro, Ser, Thr, or Val). This chain is Methionine aminopeptidase 2-1, found in Emericella nidulans (strain FGSC A4 / ATCC 38163 / CBS 112.46 / NRRL 194 / M139) (Aspergillus nidulans).